The primary structure comprises 459 residues: uncharacterized protein (459 aa).

Residues 2 to 60 enclose the TRAM domain; it reads NLRVKQKIPLKIKRMGINGEGIGFYKRTLVFVPGALKGEEIFCQITSVKHNFVQARLLT. Residues Cys-73, Cys-79, Cys-82, and Cys-162 each contribute to the [4Fe-4S] cluster site. S-adenosyl-L-methionine contacts are provided by Gln-284, Tyr-313, Asp-334, and Asp-382. Cys-409 acts as the Nucleophile in catalysis.

Belongs to the class I-like SAM-binding methyltransferase superfamily. RNA M5U methyltransferase family.

This is an uncharacterized protein from Streptococcus mutans serotype c (strain ATCC 700610 / UA159).